The following is a 457-amino-acid chain: tRNA-2-methylthio-N(6)-dimethylallyladenosine synthase (457 aa).

An MTTase N-terminal domain is found at 3–120; the sequence is KKVYVKTFGC…LPQMIDARRT (118 aa). Positions 12, 49, 83, 157, 161, and 164 each coordinate [4Fe-4S] cluster. Residues 143–377 form the Radical SAM core domain; the sequence is RVEGPTAFVS…QATIEENVAR (235 aa). The TRAM domain occupies 380 to 447; that stretch reads QSMVGKVERI…PHSLRGELVL (68 aa).

This sequence belongs to the methylthiotransferase family. MiaB subfamily. In terms of assembly, monomer. [4Fe-4S] cluster is required as a cofactor.

It is found in the cytoplasm. The enzyme catalyses N(6)-dimethylallyladenosine(37) in tRNA + (sulfur carrier)-SH + AH2 + 2 S-adenosyl-L-methionine = 2-methylsulfanyl-N(6)-dimethylallyladenosine(37) in tRNA + (sulfur carrier)-H + 5'-deoxyadenosine + L-methionine + A + S-adenosyl-L-homocysteine + 2 H(+). Catalyzes the methylthiolation of N6-(dimethylallyl)adenosine (i(6)A), leading to the formation of 2-methylthio-N6-(dimethylallyl)adenosine (ms(2)i(6)A) at position 37 in tRNAs that read codons beginning with uridine. The sequence is that of tRNA-2-methylthio-N(6)-dimethylallyladenosine synthase from Burkholderia multivorans (strain ATCC 17616 / 249).